Consider the following 224-residue polypeptide: Proteasome subunit beta (224 aa).

The propeptide at 1 to 6 is removed in mature form; by autocatalysis; that stretch reads MDVMKG. The active-site Nucleophile is the T7.

Belongs to the peptidase T1B family. The 20S proteasome core is composed of 14 alpha and 14 beta subunits that assemble into four stacked heptameric rings, resulting in a barrel-shaped structure. The two inner rings, each composed of seven catalytic beta subunits, are sandwiched by two outer rings, each composed of seven alpha subunits. The catalytic chamber with the active sites is on the inside of the barrel. Has a gated structure, the ends of the cylinder being occluded by the N-termini of the alpha-subunits. Is capped at one or both ends by the proteasome regulatory ATPase, PAN.

The protein localises to the cytoplasm. It carries out the reaction Cleavage of peptide bonds with very broad specificity.. With respect to regulation, the formation of the proteasomal ATPase PAN-20S proteasome complex, via the docking of the C-termini of PAN into the intersubunit pockets in the alpha-rings, triggers opening of the gate for substrate entry. Interconversion between the open-gate and close-gate conformations leads to a dynamic regulation of the 20S proteasome proteolysis activity. Its function is as follows. Component of the proteasome core, a large protease complex with broad specificity involved in protein degradation. The M.jannaschii proteasome is able to cleave oligopeptides after Glu, Asp, Tyr, Phe, Trp, slightly after Arg, but not after Ala. Thus, displays caspase-like and chymotrypsin-like activities and low level of trypsin-like activity. The sequence is that of Proteasome subunit beta from Methanocaldococcus jannaschii (strain ATCC 43067 / DSM 2661 / JAL-1 / JCM 10045 / NBRC 100440) (Methanococcus jannaschii).